The primary structure comprises 316 residues: Protoheme IX farnesyltransferase (316 aa).

The next 9 helical transmembrane spans lie at 32-52 (VMSL…THVN), 53-73 (PIIG…SGAL), 98-118 (VARE…VITL), 120-140 (FVAN…YVVI), 153-173 (IVIG…AVAG), 180-200 (LALF…LALV), 226-246 (ILLY…IGFA), 251-271 (GLLS…VYLA), and 280-300 (VAMR…AAIV).

The protein belongs to the UbiA prenyltransferase family. Protoheme IX farnesyltransferase subfamily.

The protein resides in the cell inner membrane. It catalyses the reaction heme b + (2E,6E)-farnesyl diphosphate + H2O = Fe(II)-heme o + diphosphate. It participates in porphyrin-containing compound metabolism; heme O biosynthesis; heme O from protoheme: step 1/1. Converts heme B (protoheme IX) to heme O by substitution of the vinyl group on carbon 2 of heme B porphyrin ring with a hydroxyethyl farnesyl side group. The polypeptide is Protoheme IX farnesyltransferase (Methylocella silvestris (strain DSM 15510 / CIP 108128 / LMG 27833 / NCIMB 13906 / BL2)).